The chain runs to 441 residues: MFQRRSLLSVRSSGSQIAFRRFVSLTHKDPTPDTTSCNIIKKEGANIISVYARYPVVAAKGEGSYLFDKEGRKYIDFTSGVAVTSLGHAHPEVARLAADQCSKLVHSSNLFYNEPAIELSNVINNSLAKNSGIAGPTKIFFANCGTEANETALKFARKAAFEKYGEGKSQIVYFNNSFHGRSLGSLSITANPKYKRGFQPLLPDVVQAVYNDPASIEQFVNDKTAAVIVEPVQGEGGICPAKPEFLIALRKACDKVGASLIYDEIQCGLGRSGDLWAHSIVKDVASPDIITVAKPLANGLPIGATIVSSKIAAEIHPGEHGSTFGGNPVACRVGTFCVNELGSSKILQNVRKQHKALTSRFDDFVAKYPNLIRGYAGRGLLLGLQFTEPPAKFIELARQQGLLLLPGGNNNTRVLPSLNVKDEVIAKGLDIMESTLKALSK.

K294 is subject to N6-(pyridoxal phosphate)lysine.

Belongs to the class-III pyridoxal-phosphate-dependent aminotransferase family. It depends on pyridoxal 5'-phosphate as a cofactor.

Its subcellular location is the mitochondrion matrix. The catalysed reaction is N(2)-acetyl-L-ornithine + 2-oxoglutarate = N-acetyl-L-glutamate 5-semialdehyde + L-glutamate. Its pathway is amino-acid biosynthesis; L-arginine biosynthesis; N(2)-acetyl-L-ornithine from L-glutamate: step 4/4. The polypeptide is Probable acetylornithine aminotransferase, mitochondrial (arg1) (Schizosaccharomyces pombe (strain 972 / ATCC 24843) (Fission yeast)).